The primary structure comprises 343 residues: Dihydroorotase (343 aa).

2 residues coordinate Zn(2+): His14 and His16. Substrate-binding positions include 16–18 (HLR) and Asn42. Zn(2+) is bound by residues Lys100, His137, and His175. Residue Lys100 is modified to N6-carboxylysine. His137 lines the substrate pocket. Substrate is bound at residue Leu220. Asp248 is a Zn(2+) binding site. Residue Asp248 is part of the active site. The substrate site is built by His252 and Ala264.

It belongs to the metallo-dependent hydrolases superfamily. DHOase family. Class II DHOase subfamily. As to quaternary structure, homodimer. The cofactor is Zn(2+).

It catalyses the reaction (S)-dihydroorotate + H2O = N-carbamoyl-L-aspartate + H(+). Its pathway is pyrimidine metabolism; UMP biosynthesis via de novo pathway; (S)-dihydroorotate from bicarbonate: step 3/3. Catalyzes the reversible cyclization of carbamoyl aspartate to dihydroorotate. The chain is Dihydroorotase from Synechococcus sp. (strain CC9902).